We begin with the raw amino-acid sequence, 455 residues long: Phosphoglucosamine mutase (455 aa).

S102 (phosphoserine intermediate) is an active-site residue. Mg(2+) contacts are provided by S102, D241, D243, and D245. S102 is modified (phosphoserine).

The protein belongs to the phosphohexose mutase family. It depends on Mg(2+) as a cofactor. Post-translationally, activated by phosphorylation.

The catalysed reaction is alpha-D-glucosamine 1-phosphate = D-glucosamine 6-phosphate. Functionally, catalyzes the conversion of glucosamine-6-phosphate to glucosamine-1-phosphate. The polypeptide is Phosphoglucosamine mutase (Legionella pneumophila (strain Lens)).